A 610-amino-acid polypeptide reads, in one-letter code: Zinc metalloproteinase-disintegrin-like BITM06A (610 aa).

The first 20 residues, 1-20 (MIQVLLVTICLAAFPYQGSS), serve as a signal peptide directing secretion. Residues 21–189 (IILESGNVND…KKASQLVVTA (169 aa)) constitute a propeptide that is removed on maturation. A Peptidase M12B domain is found at 198 to 394 (RYVELFIVVD…ENPQCILNEP (197 aa)). Ca(2+)-binding residues include Glu-201 and Asp-285. Intrachain disulfides connect Cys-309-Cys-389, Cys-349-Cys-373, and Cys-351-Cys-356. His-334 provides a ligand contact to Zn(2+). Glu-335 is a catalytic residue. Residues His-338 and His-344 each coordinate Zn(2+). An N-linked (GlcNAc...) asparagine glycan is attached at Asn-372. Residues Cys-389, Asn-392, Val-404, Asn-407, Leu-409, Glu-411, Glu-414, and Asp-417 each coordinate Ca(2+). A Disintegrin domain is found at 402-488 (PPVCGNELLE…ECPADVFHKN (87 aa)). Intrachain disulfides connect Cys-405-Cys-434, Cys-416-Cys-429, Cys-418-Cys-424, Cys-428-Cys-451, Cys-442-Cys-448, Cys-447-Cys-473, Cys-460-Cys-480, Cys-467-Cys-499, Cys-492-Cys-504, Cys-511-Cys-561, Cys-526-Cys-572, Cys-539-Cys-549, Cys-556-Cys-598, and Cys-592-Cys-603. The short motif at 466 to 468 (ECD) is the D/ECD-tripeptide element. Positions 468, 469, 471, 483, and 484 each coordinate Ca(2+).

Belongs to the venom metalloproteinase (M12B) family. P-III subfamily. P-IIIa sub-subfamily. In terms of assembly, monomer. It depends on Zn(2+) as a cofactor. Expressed by the venom gland.

It localises to the secreted. Functionally, snake venom metalloproteinase that impairs hemostasis in the envenomed animal. This Bothrops insularis (Golden lancehead) protein is Zinc metalloproteinase-disintegrin-like BITM06A.